We begin with the raw amino-acid sequence, 156 residues long: Ribonuclease H (156 aa).

An RNase H type-1 domain is found at 3–144; the sequence is ERKLIHIFTD…CDILARSAAE (142 aa). Positions 12, 50, 72, and 136 each coordinate Mg(2+).

It belongs to the RNase H family. Monomer. Mg(2+) serves as cofactor.

The protein resides in the cytoplasm. It catalyses the reaction Endonucleolytic cleavage to 5'-phosphomonoester.. Endonuclease that specifically degrades the RNA of RNA-DNA hybrids. This chain is Ribonuclease H, found in Shewanella putrefaciens (strain CN-32 / ATCC BAA-453).